Consider the following 367-residue polypeptide: Small ribosomal subunit biogenesis GTPase RsgA (367 aa).

One can recognise a CP-type G domain in the interval 112–267; that stretch reads AEQVLATNVD…VIDTPGLREL (156 aa). GTP is bound by residues 157 to 160 and 209 to 217; these read NKSD and GSSGAGKST. Positions 291, 296, 298, and 304 each coordinate Zn(2+).

The protein belongs to the TRAFAC class YlqF/YawG GTPase family. RsgA subfamily. As to quaternary structure, monomer. Associates with 30S ribosomal subunit, binds 16S rRNA. Zn(2+) is required as a cofactor.

It localises to the cytoplasm. In terms of biological role, one of several proteins that assist in the late maturation steps of the functional core of the 30S ribosomal subunit. Helps release RbfA from mature subunits. May play a role in the assembly of ribosomal proteins into the subunit. Circularly permuted GTPase that catalyzes slow GTP hydrolysis, GTPase activity is stimulated by the 30S ribosomal subunit. In Opitutus terrae (strain DSM 11246 / JCM 15787 / PB90-1), this protein is Small ribosomal subunit biogenesis GTPase RsgA.